We begin with the raw amino-acid sequence, 520 residues long: T-box transcription factor TBX22 (520 aa).

The interval 1-91 (MALSSRARAF…NSSESLEEKD (91 aa)) is disordered. Positions 33-49 (PELREKKGGEEEEERRS) are enriched in basic and acidic residues. Over residues 67–84 (STSASSGCGSDSGYGNSS) the composition is skewed to low complexity. Residues 96 to 283 (LQGSELWKRF…RNPFAKGFRD (188 aa)) constitute a DNA-binding region (T-box).

As to expression, seems to be expressed at a low level.

It is found in the nucleus. In terms of biological role, probable transcriptional regulator involved in developmental processes. This is major determinant crucial to palatogenesis. This is T-box transcription factor TBX22 (TBX22) from Homo sapiens (Human).